A 235-amino-acid chain; its full sequence is Small ribosomal subunit protein uS2 (235 aa).

Belongs to the universal ribosomal protein uS2 family.

The chain is Small ribosomal subunit protein uS2 from Geobacillus thermodenitrificans (strain NG80-2).